A 292-amino-acid polypeptide reads, in one-letter code: ATP phosphoribosyltransferase (292 aa).

The protein belongs to the ATP phosphoribosyltransferase family. Long subfamily. Requires Mg(2+) as cofactor.

It is found in the cytoplasm. It carries out the reaction 1-(5-phospho-beta-D-ribosyl)-ATP + diphosphate = 5-phospho-alpha-D-ribose 1-diphosphate + ATP. It functions in the pathway amino-acid biosynthesis; L-histidine biosynthesis; L-histidine from 5-phospho-alpha-D-ribose 1-diphosphate: step 1/9. With respect to regulation, feedback inhibited by histidine. Its function is as follows. Catalyzes the condensation of ATP and 5-phosphoribose 1-diphosphate to form N'-(5'-phosphoribosyl)-ATP (PR-ATP). Has a crucial role in the pathway because the rate of histidine biosynthesis seems to be controlled primarily by regulation of HisG enzymatic activity. The chain is ATP phosphoribosyltransferase from Thermodesulfovibrio yellowstonii (strain ATCC 51303 / DSM 11347 / YP87).